The primary structure comprises 190 residues: NADH-quinone oxidoreductase subunit B (190 aa).

[4Fe-4S] cluster is bound by residues C39, C40, C104, and C135.

The protein belongs to the complex I 20 kDa subunit family. NDH-1 is composed of 14 different subunits. Subunits NuoB, C, D, E, F, and G constitute the peripheral sector of the complex. [4Fe-4S] cluster serves as cofactor.

The protein localises to the cell inner membrane. The enzyme catalyses a quinone + NADH + 5 H(+)(in) = a quinol + NAD(+) + 4 H(+)(out). Functionally, NDH-1 shuttles electrons from NADH, via FMN and iron-sulfur (Fe-S) centers, to quinones in the respiratory chain. The immediate electron acceptor for the enzyme in this species is believed to be a menaquinone. Couples the redox reaction to proton translocation (for every two electrons transferred, four hydrogen ions are translocated across the cytoplasmic membrane), and thus conserves the redox energy in a proton gradient. The sequence is that of NADH-quinone oxidoreductase subunit B from Prosthecochloris aestuarii (strain DSM 271 / SK 413).